Reading from the N-terminus, the 422-residue chain is 3-isopropylmalate dehydratase large subunit (422 aa).

Residues C294, C354, and C357 each contribute to the [4Fe-4S] cluster site.

It belongs to the aconitase/IPM isomerase family. LeuC type 2 subfamily. As to quaternary structure, heterodimer of LeuC and LeuD. The cofactor is [4Fe-4S] cluster.

The enzyme catalyses (2R,3S)-3-isopropylmalate = (2S)-2-isopropylmalate. The protein operates within amino-acid biosynthesis; L-leucine biosynthesis; L-leucine from 3-methyl-2-oxobutanoate: step 2/4. Its function is as follows. Catalyzes the isomerization between 2-isopropylmalate and 3-isopropylmalate, via the formation of 2-isopropylmaleate. The protein is 3-isopropylmalate dehydratase large subunit of Mycolicibacterium smegmatis (strain ATCC 700084 / mc(2)155) (Mycobacterium smegmatis).